We begin with the raw amino-acid sequence, 229 residues long: 7-cyano-7-deazaguanine synthase (229 aa).

Position 12–22 (leucine 12–alanine 22) interacts with ATP. The Zn(2+) site is built by cysteine 194, cysteine 202, cysteine 205, and cysteine 208.

It belongs to the QueC family. It depends on Zn(2+) as a cofactor.

It carries out the reaction 7-carboxy-7-deazaguanine + NH4(+) + ATP = 7-cyano-7-deazaguanine + ADP + phosphate + H2O + H(+). It participates in purine metabolism; 7-cyano-7-deazaguanine biosynthesis. Catalyzes the ATP-dependent conversion of 7-carboxy-7-deazaguanine (CDG) to 7-cyano-7-deazaguanine (preQ(0)). The protein is 7-cyano-7-deazaguanine synthase of Acidobacterium capsulatum (strain ATCC 51196 / DSM 11244 / BCRC 80197 / JCM 7670 / NBRC 15755 / NCIMB 13165 / 161).